Reading from the N-terminus, the 274-residue chain is MRLVILETSQSVGKWAAKYVMKRINDFQPGPNRYFVLGLPTGSTPLGMYKELIEFHKQGKVSFQYVKTFNMDEYVGLPRDHQESYHFFMWHNFFKHIDIEPQNVHILNGNAPDLVAECNKFEEQIKEAGGVELFIGGIGPDGHIAFNEPGSSLVSRTRVKTLAQDTLEANARFFDNDMSKVPKQALTVGVGTVMDSKEVMILITGAHKAFALYKAIEEGVNHMWTVSAFQQHANTLMICDEDATLELRVKTVKYFKGILRDIDEGAATQDGYKN.

Catalysis depends on Asp-72, which acts as the Proton acceptor; for enolization step. The active-site For ring-opening step is Asp-141. His-143 acts as the Proton acceptor; for ring-opening step in catalysis. Catalysis depends on Glu-148, which acts as the For ring-opening step.

Belongs to the glucosamine/galactosamine-6-phosphate isomerase family. As to quaternary structure, homohexamer.

The protein localises to the cytoplasm. The catalysed reaction is alpha-D-glucosamine 6-phosphate + H2O = beta-D-fructose 6-phosphate + NH4(+). It functions in the pathway nucleotide-sugar biosynthesis; UDP-N-acetyl-alpha-D-glucosamine biosynthesis; alpha-D-glucosamine 6-phosphate from D-fructose 6-phosphate: step 1/1. Functionally, catalyzes the reversible conversion of alpha-D-glucosamine 6-phosphate (GlcN-6P) into beta-D-fructose 6-phosphate (Fru-6P) and ammonium ion, a regulatory reaction step in de novo uridine diphosphate-N-acetyl-alpha-D-glucosamine (UDP-GlcNAc) biosynthesis via hexosamine pathway. This Drosophila pseudoobscura pseudoobscura (Fruit fly) protein is Glucosamine-6-phosphate deaminase.